Here is a 337-residue protein sequence, read N- to C-terminus: Cysteine proteinase 3 (337 aa).

Positions 1 to 21 (MRLSITLIFTLIVLSISFISA) are cleaved as a signal peptide. Residues 22–120 (GNVFSHKQYQ…GLRLNRPQFK (99 aa)) constitute a propeptide, activation peptide. 3 disulfides stabilise this stretch: C142–C185, C176–C219, and C277–C326. C145 is an active-site residue. Catalysis depends on residues H284 and N304.

This sequence belongs to the peptidase C1 family.

The protein resides in the lysosome. In Dictyostelium discoideum (Social amoeba), this protein is Cysteine proteinase 3 (cprC).